Reading from the N-terminus, the 56-residue chain is Small ribosomal subunit protein uS14 (56 aa).

Zn(2+) is bound by residues cysteine 21, cysteine 24, cysteine 39, and cysteine 42.

Belongs to the universal ribosomal protein uS14 family. In terms of assembly, component of the 40S small ribosomal subunit. The cofactor is Zn(2+).

Its subcellular location is the cytoplasm. It is found in the cytosol. It localises to the rough endoplasmic reticulum. This Ixodes scapularis (Black-legged tick) protein is Small ribosomal subunit protein uS14 (RpS29).